The following is a 705-amino-acid chain: Lethal(3)malignant brain tumor-like protein 2 (705 aa).

The segment at 1-84 (MEKPPSIEET…GTPRSLDGSG (84 aa)) is disordered. Ser13 carries the phosphoserine modification. A compositionally biased stretch (acidic residues) spans 15–25 (PMEEEEDDDLE). Low complexity predominate over residues 38–49 (SSVGSESSSYLE). Residues 50–60 (ESSEAENEDRE) show a composition bias toward acidic residues. Ser67 carries the post-translational modification Phosphoserine. Thr76 is modified (phosphothreonine). An FCS-type zinc finger spans residues 81 to 116 (DGSGSEPAVCEMCGIVGTREAFFSKTKRFCSVSCSR). Zn(2+) contacts are provided by Cys90, Cys93, Cys110, and Cys114. MBT repeat units lie at residues 179–283 (FDWG…LVPP), 291–391 (TDWK…IKMS), 397–500 (MAHH…LTPP), and 508–604 (FNWE…LQPP). Ser338 carries the post-translational modification Phosphoserine. Residue Lys405 forms a Glycyl lysine isopeptide (Lys-Gly) (interchain with G-Cter in SUMO2) linkage. Residues 608-705 (EPATPLKAKE…VENIKQETDD (98 aa)) are disordered. Basic residues predominate over residues 619-634 (TKKKKKQFGKKRKRIP). Residues Lys647, Lys659, and Lys675 each participate in a glycyl lysine isopeptide (Lys-Gly) (interchain with G-Cter in SUMO2) cross-link. Phosphoserine is present on residues Ser683, Ser688, and Ser689. Residue Lys700 forms a Glycyl lysine isopeptide (Lys-Gly) (interchain with G-Cter in SUMO1); alternate linkage. Lys700 participates in a covalent cross-link: Glycyl lysine isopeptide (Lys-Gly) (interchain with G-Cter in SUMO2); alternate.

Part of the E2F6.com-1 complex in G0 phase composed of E2F6, MGA, MAX, TFDP1, CBX3, BAT8, EUHMTASE1, RING1, RNF2, MBLR, BAT8 and YAF2.

The protein resides in the nucleus. Its function is as follows. Putative Polycomb group (PcG) protein. PcG proteins maintain the transcriptionally repressive state of genes, probably via a modification of chromatin, rendering it heritably changed in its expressibility. Its association with a chromatin-remodeling complex suggests that it may contribute to prevent expression of genes that trigger the cell into mitosis. Binds to monomethylated and dimethylated 'Lys-20' on histone H4. Binds histone H3 peptides that are monomethylated or dimethylated on 'Lys-4', 'Lys-9' or 'Lys-27'. The polypeptide is Lethal(3)malignant brain tumor-like protein 2 (L3MBTL2) (Pongo abelii (Sumatran orangutan)).